A 28-amino-acid chain; its full sequence is Turritoxin F21-2 (28 aa).

Expressed by the venom duct.

The protein localises to the secreted. In terms of biological role, potent inhibitor of human alpha-3-beta-2 nAChRs (IC(50)=566.2 nM). Irreversibly inhibits the acetylcholine-induced response on human alpha-7/CHRNA7 (55% inhibition at 5.6 uM) and alpha-3-beta-2/CHRNA3-CHRNB2 (91% inhibition) nAChRs. This Polystira nobilis (Sea snail) protein is Turritoxin F21-2.